The sequence spans 400 residues: Nicotinate phosphoribosyltransferase (400 aa).

H220 carries the post-translational modification Phosphohistidine; by autocatalysis.

The protein belongs to the NAPRTase family. Transiently phosphorylated on a His residue during the reaction cycle. Phosphorylation strongly increases the affinity for substrates and increases the rate of nicotinate D-ribonucleotide production. Dephosphorylation regenerates the low-affinity form of the enzyme, leading to product release.

It catalyses the reaction nicotinate + 5-phospho-alpha-D-ribose 1-diphosphate + ATP + H2O = nicotinate beta-D-ribonucleotide + ADP + phosphate + diphosphate. It participates in cofactor biosynthesis; NAD(+) biosynthesis; nicotinate D-ribonucleotide from nicotinate: step 1/1. Catalyzes the synthesis of beta-nicotinate D-ribonucleotide from nicotinate and 5-phospho-D-ribose 1-phosphate at the expense of ATP. The chain is Nicotinate phosphoribosyltransferase from Escherichia fergusonii (strain ATCC 35469 / DSM 13698 / CCUG 18766 / IAM 14443 / JCM 21226 / LMG 7866 / NBRC 102419 / NCTC 12128 / CDC 0568-73).